A 509-amino-acid chain; its full sequence is Solute carrier family 2, facilitated glucose transporter member 4 (509 aa).

The Cytoplasmic segment spans residues 1 to 24 (MPSGFQQIGSEDGEPPRQRVTGTL). Positions 7-13 (QIGSEDG) are interaction with SRFBP1. Serine 10 carries the phosphoserine modification. Residues 25 to 45 (VLAVFSAVLGSLQFGYNIGVI) form a helical membrane-spanning segment. The Extracellular portion of the chain corresponds to 46–81 (NAPQKVIEQSYNETWLGRQGPEGPGSIPPGTLTTLW). Residue asparagine 57 is glycosylated (N-linked (GlcNAc...) asparagine). The helical transmembrane segment at 82 to 102 (ALSVAIFSVGGMISSFLIGII) threads the bilayer. Over 103-111 (SQWLGRKRA) the chain is Cytoplasmic. Residues 112-132 (MLFNNALAVLGGTLMGLAKAA) form a helical membrane-spanning segment. Over 133-142 (ASYEMLILGR) the chain is Extracellular. A helical membrane pass occupies residues 143-163 (FFIGAYSGLTSGLVPMYVGEI). Residues 164–171 (APTHLRGA) lie on the Cytoplasmic side of the membrane. Residues 172–192 (LGTLNQLAIVTGILIAQVLGL) traverse the membrane as a helical segment. Glutamine 177 is a D-glucose binding site. Residues 193-200 (ESMLGTAT) lie on the Extracellular side of the membrane. Residues 201–221 (LWPLLLGITVLPALLQMVLLP) form a helical membrane-spanning segment. The Cytoplasmic portion of the chain corresponds to 222–287 (LCPESPRYLY…LLGSHTHRQP (66 aa)). A lipid anchor (S-palmitoyl cysteine) is attached at cysteine 223. Position 274 is a phosphoserine; by SGK1 (serine 274). Residues 288–308 (LVIAIVLQLSQQLSGINAVFY) traverse the membrane as a helical segment. D-glucose-binding positions include 298–299 (QQ) and asparagine 304. At 309-323 (YSTSIFESAGVEKPA) the chain is on the extracellular side. The chain crosses the membrane as a helical span at residues 324–344 (YATIGAGVVNTVFTLVSVFLV). Asparagine 333 provides a ligand contact to D-glucose. Residues 345–353 (ERAGRRTLH) lie on the Cytoplasmic side of the membrane. A helical transmembrane segment spans residues 354–374 (LLGLAGMCGCAILMTVALLLL). The Extracellular portion of the chain corresponds to 375–384 (ERVPAMSYVS). The helical transmembrane segment at 385 to 405 (IVAIFGFVAFFEIGPGPIPWF) threads the bilayer. Glutamate 396 and tryptophan 404 together coordinate D-glucose. The Cytoplasmic segment spans residues 406–417 (IVAELFSQGPRP). A helical membrane pass occupies residues 418–438 (AAMAVAGFSNWTCNFIIGMGF). Over 439–445 (QYVADAM) the chain is Extracellular. A helical membrane pass occupies residues 446–466 (GPYVFLLFAVLLLGFFIFTFL). At 467–509 (KVPETRGRTFDQISAVFHRTPSLLEQEVKPSTELEYLGPDEHD) the chain is on the cytoplasmic side. At threonine 486 the chain carries Phosphothreonine. Residue serine 488 is modified to Phosphoserine. A Dileucine internalization motif motif is present at residues 489 to 490 (LL).

This sequence belongs to the major facilitator superfamily. Sugar transporter (TC 2.A.1.1) family. Glucose transporter subfamily. In terms of assembly, binds to DAXX. Interacts via its N-terminus with SRFBP1. Interacts with NDUFA9. Interacts with TRARG1; the interaction is required for proper SLC2A4 recycling after insulin stimulation. Sumoylated. Post-translationally, palmitoylated. Palmitoylation by ZDHHC7 controls the insulin-dependent translocation of GLUT4 to the plasma membrane.

Its subcellular location is the cell membrane. The protein resides in the endomembrane system. It is found in the cytoplasm. It localises to the perinuclear region. It catalyses the reaction D-glucose(out) = D-glucose(in). In terms of biological role, insulin-regulated facilitative glucose transporter, which plays a key role in removal of glucose from circulation. Response to insulin is regulated by its intracellular localization: in the absence of insulin, it is efficiently retained intracellularly within storage compartments in muscle and fat cells. Upon insulin stimulation, translocates from these compartments to the cell surface where it transports glucose from the extracellular milieu into the cell. In Bos taurus (Bovine), this protein is Solute carrier family 2, facilitated glucose transporter member 4.